Reading from the N-terminus, the 453-residue chain is MRECISIHIGQAGIQTGNACWELYCLEHGIQPDGQMPSDKTIGGGDDAFNTFFSETGAGKHVPRAVYVDLEPTVCDEVRTGTYRQLYHPEQIISGKEDAANNYARGHYTIGKEIVDLVLDRIRKLADNCTGLQGFLVFHATGGGTGSGLGSLLLERLSVDYGRKSKLSFAITPAPQVATAVVEPYNSVLSTHALLEHTDCTFCLDNEALYDVCRRNLDIERPTYTNLNRLVAQVISSLTASLRFDGALNVDVTEFQTNLVPYPRIHFMLTSYAPIISAEKAYHEQLSVAEITNSVFEPAGMMTNCDPRHGKYMACCLMYRGDVVPKDVNAAVATIKTKRTIQFVDWCPTGFKCGINYQPPTVVPGGDLARVQRAVCMVANTTAIAEALSRIDHKFDLMYAKRAFVHWYVGEGMEEGEFSEAREDLAALEKDYEEVGAETAEGEGEEEDFGEEY.

Gln-11 contributes to the GTP binding site. Lys-40 carries the post-translational modification N6-acetyllysine. Glu-71, Gly-144, Thr-145, Thr-179, Asn-206, and Asn-228 together coordinate GTP. Residue Glu-71 coordinates Mg(2+). Glu-254 is an active-site residue. The disordered stretch occupies residues 432 to 453 (YEEVGAETAEGEGEEEDFGEEY).

It belongs to the tubulin family. In terms of assembly, dimer of alpha and beta chains. A typical microtubule is a hollow water-filled tube with an outer diameter of 25 nm and an inner diameter of 15 nM. Alpha-beta heterodimers associate head-to-tail to form protofilaments running lengthwise along the microtubule wall with the beta-tubulin subunit facing the microtubule plus end conferring a structural polarity. Microtubules usually have 13 protofilaments but different protofilament numbers can be found in some organisms and specialized cells. Requires Mg(2+) as cofactor. Undergoes a tyrosination/detyrosination cycle, the cyclic removal and re-addition of a C-terminal tyrosine residue by the enzymes tubulin tyrosine carboxypeptidase (TTCP) and tubulin tyrosine ligase (TTL), respectively. Post-translationally, acetylation of alpha chains at Lys-40 stabilizes microtubules and affects affinity and processivity of microtubule motors. This modification has a role in multiple cellular functions, ranging from cell motility, cell cycle progression or cell differentiation to intracellular trafficking and signaling.

The protein localises to the cytoplasm. It localises to the cytoskeleton. The catalysed reaction is GTP + H2O = GDP + phosphate + H(+). Its function is as follows. Tubulin is the major constituent of microtubules, a cylinder consisting of laterally associated linear protofilaments composed of alpha- and beta-tubulin heterodimers. Microtubules grow by the addition of GTP-tubulin dimers to the microtubule end, where a stabilizing cap forms. Below the cap, tubulin dimers are in GDP-bound state, owing to GTPase activity of alpha-tubulin. This chain is Tubulin alpha-2 chain (TUBA2), found in Pelvetia fastigiata (Brown alga).